We begin with the raw amino-acid sequence, 400 residues long: Argininosuccinate synthase (400 aa).

10–18 (AYSGGVDTS) is a binding site for ATP. Tyrosine 89 serves as a coordination point for L-citrulline. Glycine 119 is an ATP binding site. 3 residues coordinate L-aspartate: threonine 121, asparagine 125, and aspartate 126. Asparagine 125 is a binding site for L-citrulline. 5 residues coordinate L-citrulline: arginine 129, serine 177, serine 186, glutamate 262, and tyrosine 274.

Belongs to the argininosuccinate synthase family. Type 1 subfamily. Homotetramer.

The protein localises to the cytoplasm. The enzyme catalyses L-citrulline + L-aspartate + ATP = 2-(N(omega)-L-arginino)succinate + AMP + diphosphate + H(+). The protein operates within amino-acid biosynthesis; L-arginine biosynthesis; L-arginine from L-ornithine and carbamoyl phosphate: step 2/3. In Synechococcus sp. (strain JA-2-3B'a(2-13)) (Cyanobacteria bacterium Yellowstone B-Prime), this protein is Argininosuccinate synthase.